The sequence spans 74 residues: Small ribosomal subunit protein bS20c (74 aa).

This sequence belongs to the bacterial ribosomal protein bS20 family.

The protein resides in the plastid. It is found in the chloroplast. Binds directly to 16S ribosomal RNA. The polypeptide is Small ribosomal subunit protein bS20c (Cyanidioschyzon merolae (strain NIES-3377 / 10D) (Unicellular red alga)).